The chain runs to 213 residues: mRNA-decapping protein OPG121 (213 aa).

N(7)-methyl-GTP is bound by residues glutamate 16 and arginine 50. A Nudix hydrolase domain is found at 30-209 (KDTHVFAACI…EYLSYIYNML (180 aa)). Positions 111-132 (GKLDKKESIKDCLRRELKEESD) match the Nudix box motif. Residues glutamate 117, glutamate 126, glutamate 130, aspartate 151, and glutamate 183 each contribute to the Mg(2+) site. Glutamate 126 (nucleophile) is an active-site residue. Residue aspartate 151 coordinates N(7)-methyl-GTP.

It belongs to the Nudix hydrolase family. The cofactor is Mg(2+). Requires Mn(2+) as cofactor.

It catalyses the reaction a 5'-end (N(7)-methyl 5'-triphosphoguanosine)-guanosine in mRNA + H2O = a 5'-end phospho-guanosine in mRNA + N(7)-methyl-GDP + 2 H(+). Functionally, decapping enzyme that remove the protective 5'-cap from both host and viral mRNAs to commit transcripts for decay by the cellular exonuclease XRN1. Accelerates viral and cellular mRNA turnover to eliminate competing host mRNAs and allow stage-specific synthesis of viral proteins. Acceleration of the turnover of cellular transcripts may even promote the shutoff of host protein synthesis. The polypeptide is mRNA-decapping protein OPG121 (OPG121) (Homo sapiens (Human)).